A 429-amino-acid polypeptide reads, in one-letter code: Adenylosuccinate synthetase (429 aa).

GTP contacts are provided by residues 12 to 18 (GDEGKGK) and 40 to 42 (GHT). Asp13 (proton acceptor) is an active-site residue. 2 residues coordinate Mg(2+): Asp13 and Gly40. IMP-binding positions include 13–16 (DEGK), 38–41 (NAGH), Thr128, Arg142, Gln223, Thr238, and Arg302. The active-site Proton donor is His41. Substrate is bound at residue 298–304 (VNTGRKR). Residues Arg304, 330–332 (KLD), and 412–414 (GVG) contribute to the GTP site.

Belongs to the adenylosuccinate synthetase family. As to quaternary structure, homodimer. Mg(2+) is required as a cofactor.

Its subcellular location is the cytoplasm. It carries out the reaction IMP + L-aspartate + GTP = N(6)-(1,2-dicarboxyethyl)-AMP + GDP + phosphate + 2 H(+). The protein operates within purine metabolism; AMP biosynthesis via de novo pathway; AMP from IMP: step 1/2. Functionally, plays an important role in the de novo pathway of purine nucleotide biosynthesis. Catalyzes the first committed step in the biosynthesis of AMP from IMP. In Corynebacterium glutamicum (strain R), this protein is Adenylosuccinate synthetase.